The sequence spans 513 residues: ATP synthase subunit alpha (513 aa).

An ATP-binding site is contributed by 169–176 (GDRQTGKT).

It belongs to the ATPase alpha/beta chains family. As to quaternary structure, F-type ATPases have 2 components, CF(1) - the catalytic core - and CF(0) - the membrane proton channel. CF(1) has five subunits: alpha(3), beta(3), gamma(1), delta(1), epsilon(1). CF(0) has three main subunits: a(1), b(2) and c(9-12). The alpha and beta chains form an alternating ring which encloses part of the gamma chain. CF(1) is attached to CF(0) by a central stalk formed by the gamma and epsilon chains, while a peripheral stalk is formed by the delta and b chains.

It localises to the cell inner membrane. The enzyme catalyses ATP + H2O + 4 H(+)(in) = ADP + phosphate + 5 H(+)(out). Produces ATP from ADP in the presence of a proton gradient across the membrane. The alpha chain is a regulatory subunit. The chain is ATP synthase subunit alpha from Salmonella arizonae (strain ATCC BAA-731 / CDC346-86 / RSK2980).